Consider the following 308-residue polypeptide: N-acetylmuramic acid 6-phosphate etherase (308 aa).

The SIS domain maps to 63–226; the sequence is IVDAFACGGR…STASMIRSGK (164 aa). The active-site Proton donor is glutamate 91. The active site involves glutamate 122.

This sequence belongs to the GCKR-like family. MurNAc-6-P etherase subfamily. In terms of assembly, homodimer.

The enzyme catalyses N-acetyl-D-muramate 6-phosphate + H2O = N-acetyl-D-glucosamine 6-phosphate + (R)-lactate. The protein operates within amino-sugar metabolism; 1,6-anhydro-N-acetylmuramate degradation. It functions in the pathway amino-sugar metabolism; N-acetylmuramate degradation. Its pathway is cell wall biogenesis; peptidoglycan recycling. In terms of biological role, specifically catalyzes the cleavage of the D-lactyl ether substituent of MurNAc 6-phosphate, producing GlcNAc 6-phosphate and D-lactate. Together with AnmK, is also required for the utilization of anhydro-N-acetylmuramic acid (anhMurNAc) either imported from the medium or derived from its own cell wall murein, and thus plays a role in cell wall recycling. The protein is N-acetylmuramic acid 6-phosphate etherase of Colwellia psychrerythraea (strain 34H / ATCC BAA-681) (Vibrio psychroerythus).